A 182-amino-acid polypeptide reads, in one-letter code: uncharacterized protein (182 aa).

Helical transmembrane passes span 19 to 39 (LFGI…SIVS), 51 to 71 (IYLV…VVFI), 87 to 107 (IFTV…IELF), and 118 to 138 (CSPF…LAMC).

It is found in the membrane. This is an uncharacterized protein from Caenorhabditis elegans.